The chain runs to 339 residues: Phosphate acyltransferase (339 aa).

The protein belongs to the PlsX family. In terms of assembly, homodimer. Probably interacts with PlsY.

It is found in the cytoplasm. It carries out the reaction a fatty acyl-[ACP] + phosphate = an acyl phosphate + holo-[ACP]. Its pathway is lipid metabolism; phospholipid metabolism. Functionally, catalyzes the reversible formation of acyl-phosphate (acyl-PO(4)) from acyl-[acyl-carrier-protein] (acyl-ACP). This enzyme utilizes acyl-ACP as fatty acyl donor, but not acyl-CoA. This chain is Phosphate acyltransferase, found in Helicobacter pylori (strain J99 / ATCC 700824) (Campylobacter pylori J99).